The chain runs to 303 residues: Esterase (303 aa).

The short motif at 79–81 (HGG) is the Involved in the stabilization of the negatively charged intermediate by the formation of the oxyanion hole element. Active-site residues include serine 149 and glutamate 244.

The protein belongs to the 'GDXG' lipolytic enzyme family.

The protein localises to the secreted. This chain is Esterase (est), found in Acinetobacter venetianus (strain ATCC 31012 / DSM 23050 / BCRC 14357 / CCUG 45561 / CIP 110063 / KCTC 2702 / LMG 19082 / RAG-1).